A 619-amino-acid polypeptide reads, in one-letter code: Chaperone protein HscA homolog (619 aa).

The protein belongs to the heat shock protein 70 family.

Functionally, chaperone involved in the maturation of iron-sulfur cluster-containing proteins. Has a low intrinsic ATPase activity which is markedly stimulated by HscB. The polypeptide is Chaperone protein HscA homolog (Shewanella frigidimarina (strain NCIMB 400)).